A 162-amino-acid chain; its full sequence is Endoribonuclease YbeY (162 aa).

Residues His118, His122, and His128 each coordinate Zn(2+).

This sequence belongs to the endoribonuclease YbeY family. It depends on Zn(2+) as a cofactor.

The protein localises to the cytoplasm. Single strand-specific metallo-endoribonuclease involved in late-stage 70S ribosome quality control and in maturation of the 3' terminus of the 16S rRNA. This is Endoribonuclease YbeY from Glaesserella parasuis serovar 5 (strain SH0165) (Haemophilus parasuis).